Reading from the N-terminus, the 79-residue chain is Conotoxin ArMSGL-0122 (79 aa).

A signal peptide spans 1-20 (MSRLGIMVLTLLLLVFIVTS). A propeptide spanning residues 21–44 (HQDAGEKQATQRAAINFRWKRSLT) is cleaved from the precursor. 3 disulfides stabilise this stretch: Cys52–Cys64, Cys56–Cys73, and Cys63–Cys77. Leu78 bears the Leucine amide mark.

It belongs to the conotoxin O3 superfamily. In terms of tissue distribution, expressed by the venom duct.

The protein localises to the secreted. The chain is Conotoxin ArMSGL-0122 from Conus arenatus (Sand-dusted cone).